The chain runs to 121 residues: LHHQIIPVLSQHQTPTHALQSHHHIPVMATQQPTQPPQPMMPMPGQHSVTPTQHHQSNLPQPGQQPFQPQFPQKPTHRPIQPQAPVHPMPPMPQPQLPPMFPLQPLPPLLPDLPLEPWPAS.

The disordered stretch occupies residues 1–121 (LHHQIIPVLS…DLPLEPWPAS (121 aa)). Polar residues-rich tracts occupy residues 10-19 (SQHQTPTHAL) and 47-59 (HSVTPTQHHQSNL). Residues 60–84 (PQPGQQPFQPQFPQKPTHRPIQPQA) show a composition bias toward low complexity. The segment covering 85 to 121 (PVHPMPPMPQPQLPPMFPLQPLPPLLPDLPLEPWPAS) has biased composition (pro residues).

The protein belongs to the amelogenin family.

The protein localises to the secreted. The protein resides in the extracellular space. It is found in the extracellular matrix. Its function is as follows. Plays a role in the biomineralization of teeth. Seems to regulate the formation of crystallites during the secretory stage of tooth enamel development. Thought to play a major role in the structural organization and mineralization of developing enamel. This Tachyglossus aculeatus aculeatus (Southeast Australian short-beaked echidna) protein is Amelogenin (AMEL).